We begin with the raw amino-acid sequence, 479 residues long: Glycogen synthase (479 aa).

Lysine 15 contacts ADP-alpha-D-glucose.

Belongs to the glycosyltransferase 1 family. Bacterial/plant glycogen synthase subfamily.

It carries out the reaction [(1-&gt;4)-alpha-D-glucosyl](n) + ADP-alpha-D-glucose = [(1-&gt;4)-alpha-D-glucosyl](n+1) + ADP + H(+). It functions in the pathway glycan biosynthesis; glycogen biosynthesis. Its function is as follows. Synthesizes alpha-1,4-glucan chains using ADP-glucose. The sequence is that of Glycogen synthase from Clostridium novyi (strain NT).